Reading from the N-terminus, the 380-residue chain is Chaperone protein DnaJ (380 aa).

The interval 1–48 (MAKKDYYDTLGVPKNASDDDIKKAYRKLAMKHHPDRNQGDKSKVSEEK) is disordered. The 68-residue stretch at 5–72 (DYYDTLGVPK…NKRMAYDQYG (68 aa)) folds into the J domain. Over residues 24 to 34 (AYRKLAMKHHP) the composition is skewed to basic residues. Residues 35-48 (DRNQGDKSKVSEEK) show a composition bias toward basic and acidic residues. A CR-type zinc finger spans residues 139–217 (GKEAQIRIPS…CHGVGKTKNN (79 aa)). Residues Cys-152, Cys-155, Cys-169, Cys-172, Cys-191, Cys-194, Cys-205, and Cys-208 each coordinate Zn(2+). CXXCXGXG motif repeat units follow at residues 152-159 (CNTCHGSG), 169-176 (CTTCHGHG), 191-198 (CPQCKGTG), and 205-212 (CVACHGVG). The segment at 357–380 (KKGGARHSPSEEGWADKLKSFFSA) is disordered. Residues 364–380 (SPSEEGWADKLKSFFSA) are compositionally biased toward basic and acidic residues.

Belongs to the DnaJ family. As to quaternary structure, homodimer. Requires Zn(2+) as cofactor.

It localises to the cytoplasm. Participates actively in the response to hyperosmotic and heat shock by preventing the aggregation of stress-denatured proteins and by disaggregating proteins, also in an autonomous, DnaK-independent fashion. Unfolded proteins bind initially to DnaJ; upon interaction with the DnaJ-bound protein, DnaK hydrolyzes its bound ATP, resulting in the formation of a stable complex. GrpE releases ADP from DnaK; ATP binding to DnaK triggers the release of the substrate protein, thus completing the reaction cycle. Several rounds of ATP-dependent interactions between DnaJ, DnaK and GrpE are required for fully efficient folding. Also involved, together with DnaK and GrpE, in the DNA replication of plasmids through activation of initiation proteins. The protein is Chaperone protein DnaJ of Polaromonas sp. (strain JS666 / ATCC BAA-500).